We begin with the raw amino-acid sequence, 430 residues long: Cytochrome c biogenesis protein CcsB (430 aa).

A run of 3 helical transmembrane segments spans residues 14–34 (LRIA…GTAI), 72–92 (SSWF…CSWR), and 162–182 (AGPM…VWGS).

It belongs to the Ccs1/CcsB family. As to quaternary structure, may interact with CcsA.

The protein resides in the cellular thylakoid membrane. Functionally, required during biogenesis of c-type cytochromes (cytochrome c6 and cytochrome f) at the step of heme attachment. This Prochlorococcus marinus (strain MIT 9313) protein is Cytochrome c biogenesis protein CcsB.